Reading from the N-terminus, the 512-residue chain is Tyrosine-protein kinase Lyn (512 aa).

Residues 1-62 (MGCIKSKGKD…GQRFQTKDPE (62 aa)) form a disordered region. G2 carries N-myristoyl glycine lipidation. Residue C3 is the site of S-palmitoyl cysteine attachment. A phosphoserine mark is found at S11 and S13. The 61-residue stretch at 63 to 123 (EQGDIVVALY…PSNYVAKLNT (61 aa)) folds into the SH3 domain. In terms of domain architecture, SH2 spans 129–226 (WFFKDITRKD…GLCRRLEKAC (98 aa)). The residue at position 193 (Y193) is a Phosphotyrosine. A Phosphoserine modification is found at S228. The 255-residue stretch at 247–501 (IKLVKRLGAG…YLQSVLDDFY (255 aa)) folds into the Protein kinase domain. ATP contacts are provided by residues 253-261 (LGAGQFGEV) and K275. Residues Y306 and Y316 each carry the phosphotyrosine modification. The active-site Proton acceptor is D367. Residue Y397 is modified to Phosphotyrosine; by autocatalysis. 2 positions are modified to phosphotyrosine: Y460 and Y473. Position 508 is a phosphotyrosine; by autocatalysis, CSK and MATK (Y508).

Belongs to the protein kinase superfamily. Tyr protein kinase family. SRC subfamily. Interacts with TEC. Interacts (via SH2 domain) with FLT3 (tyrosine phosphorylated). Interacts with LIME1 and with CD79A upon activation of the B-cell antigen receptor. Interacts with the B-cell receptor complex. Interacts with phosphorylated THEMIS2. Interacts with EPOR. Interacts with MS4A2/FCER1B. Interaction (via the SH2 and SH3 domains) with MUC1 is stimulated by IL7 and the subsequent phosphorylation increases the binding between MUC1 and CTNNB1/beta-catenin. Interacts with ADAM15. Interacts with NDFIP2 and more weakly with NDFIP1. Interacts with FASLG. Interacts with KIT. Interacts with HCLS1. Interacts with FCGR2B. Interacts with FCGR1A; the interaction may be indirect. Interacts with CD19, CD22, CD79A and CD79B. Interacts (via SH3 domain) with CBLC, PPP1R15A and PDE4A. Interacts with TGFB1I1. Interacts (via SH3 domain) with PIK3R1, the regulatory subunit of phosphatidylinositol 3-kinase; this interaction enhances phosphatidylinositol 3-kinase activity. Interacts with CSF2RB, the common subunit of the IL3, IL5 and CSF2 receptors. Interacts with PAG1; identified in a complex with PAG1 and STAT3. Interacts with ABL1. Interacts with PTPN6/SHP-1. Interacts (via SH3 domain) with SCIMP (via proline-rich region). This interaction facilitates the phosphorylation of SCIMP on 'Tyr-107', which enhances binding of SCIMP to TLR4, and consequently the phosphorylation of TLR4 in response to stimulation by lipopolysaccharide in macrophages. Interacts with LPXN (via LD motif 3) and the interaction is induced upon B-cell antigen receptor (BCR) activation. Interacts (via SH3-domain) with ANKRD54 (via ankyrin repeat region) in an activation-independent status of LYN. Forms a multiprotein complex with ANKRD54 and HCLS1. Interacts (via SH2 and SH3 domains) with UNC119; leading to LYN activation. Interacts with CD36. Interacts with LYN. Interacts with SKAP1 and FYB1; this interaction promotes the phosphorylation of CLNK. Interacts with BCAR1/CAS and NEDD9/HEF1. As to quaternary structure, (Microbial infection) Interacts with Epstein-Barr virus LMP2A. In terms of assembly, (Microbial infection) Interacts with Herpes virus saimiri tyrosine kinase interacting protein (Tip). Ubiquitinated by CBL, leading to its degradation. Ubiquitination is SH3-dependent. In terms of processing, autophosphorylated. Phosphorylated on tyrosine residues in response to KIT signaling. Phosphorylation at Tyr-397 is required for optimal activity. Phosphorylation at Tyr-508 inhibits kinase activity. Phosphorylated at Tyr-508 by CSK. Dephosphorylated by PTPRC/CD45. Becomes rapidly phosphorylated upon activation of the B-cell receptor and the immunoglobulin receptor FCGR1A. Phosphorylated in response to ITGB1 in B-cells. Detected in monocytes (at protein level). Detected in placenta, and in fetal brain, lung, liver and kidney. Widely expressed in a variety of organs, tissues, and cell types such as epidermoid, hematopoietic, and neuronal cells. Expressed in primary neuroblastoma tumors.

The protein localises to the cell membrane. Its subcellular location is the nucleus. It is found in the cytoplasm. It localises to the perinuclear region. The protein resides in the golgi apparatus. The protein localises to the membrane. The enzyme catalyses L-tyrosyl-[protein] + ATP = O-phospho-L-tyrosyl-[protein] + ADP + H(+). Subject to autoinhibition, mediated by intramolecular interactions between the SH2 domain and the C-terminal phosphotyrosine. Phosphorylation at Tyr-397 is required for optimal activity. Phosphorylated by CSK at Tyr-508; phosphorylation at Tyr-508 inhibits kinase activity. Kinase activity is modulated by dephosphorylation by PTPRC/CD45. Inhibited by Dasatinib, PP2, and SU6656. In terms of biological role, non-receptor tyrosine-protein kinase that transmits signals from cell surface receptors and plays an important role in the regulation of innate and adaptive immune responses, hematopoiesis, responses to growth factors and cytokines, integrin signaling, but also responses to DNA damage and genotoxic agents. Functions primarily as negative regulator, but can also function as activator, depending on the context. Required for the initiation of the B-cell response, but also for its down-regulation and termination. Plays an important role in the regulation of B-cell differentiation, proliferation, survival and apoptosis, and is important for immune self-tolerance. Acts downstream of several immune receptors, including the B-cell receptor, CD79A, CD79B, CD5, CD19, CD22, FCER1, FCGR2, FCGR1A, TLR2 and TLR4. Plays a role in the inflammatory response to bacterial lipopolysaccharide. Mediates the responses to cytokines and growth factors in hematopoietic progenitors, platelets, erythrocytes, and in mature myeloid cells, such as dendritic cells, neutrophils and eosinophils. Acts downstream of EPOR, KIT, MPL, the chemokine receptor CXCR4, as well as the receptors for IL3, IL5 and CSF2. Plays an important role in integrin signaling. Regulates cell proliferation, survival, differentiation, migration, adhesion, degranulation, and cytokine release. Involved in the regulation of endothelial activation, neutrophil adhesion and transendothelial migration. Down-regulates signaling pathways by phosphorylation of immunoreceptor tyrosine-based inhibitory motifs (ITIM), that then serve as binding sites for phosphatases, such as PTPN6/SHP-1, PTPN11/SHP-2 and INPP5D/SHIP-1, that modulate signaling by dephosphorylation of kinases and their substrates. Phosphorylates LIME1 in response to CD22 activation. Phosphorylates BTK, CBL, CD5, CD19, CD72, CD79A, CD79B, CSF2RB, DOK1, HCLS1, LILRB3/PIR-B, MS4A2/FCER1B, SYK and TEC. Promotes phosphorylation of SIRPA, PTPN6/SHP-1, PTPN11/SHP-2 and INPP5D/SHIP-1. Mediates phosphorylation of the BCR-ABL fusion protein. Required for rapid phosphorylation of FER in response to FCER1 activation. Mediates KIT phosphorylation. Acts as an effector of EPOR (erythropoietin receptor) in controlling KIT expression and may play a role in erythroid differentiation during the switch between proliferation and maturation. Depending on the context, activates or inhibits several signaling cascades. Regulates phosphatidylinositol 3-kinase activity and AKT1 activation. Regulates activation of the MAP kinase signaling cascade, including activation of MAP2K1/MEK1, MAPK1/ERK2, MAPK3/ERK1, MAPK8/JNK1 and MAPK9/JNK2. Mediates activation of STAT5A and/or STAT5B. Phosphorylates LPXN on 'Tyr-72'. Kinase activity facilitates TLR4-TLR6 heterodimerization and signal initiation. Phosphorylates SCIMP on 'Tyr-107'; this enhances binding of SCIMP to TLR4, promoting the phosphorylation of TLR4, and a selective cytokine response to lipopolysaccharide in macrophages. Phosphorylates CLNK. Phosphorylates BCAR1/CAS and NEDD9/HEF1. This Homo sapiens (Human) protein is Tyrosine-protein kinase Lyn (LYN).